Here is a 1108-residue protein sequence, read N- to C-terminus: Activity-dependent neuroprotector homeobox protein (1108 aa).

The interval 1–685 (MFQLPVNNLG…ASTITLHLVH (685 aa)) is binds to beta-catenin/CTNNB1. Residues Lys39 and Lys72 each participate in a glycyl lysine isopeptide (Lys-Gly) (interchain with G-Cter in SUMO2) cross-link. The segment at 74 to 97 (FCCSACPFSSKFFSAYKSHFRNVH) adopts a C2H2-type 1; degenerate zinc-finger fold. Ser98 carries the phosphoserine modification. A C2H2-type 2; degenerate zinc finger spans residues 107–129 (LNCPYCTFNADKKTLETHIKIFH). Positions 133 to 154 (SSAPSSSLSTFKDKNKNDGLKP) are disordered. Over residues 143–154 (FKDKNKNDGLKP) the composition is skewed to basic and acidic residues. Residues Lys144 and Lys155 each participate in a glycyl lysine isopeptide (Lys-Gly) (interchain with G-Cter in SUMO2) cross-link. The segment at 165–188 (YYCKKCTYRDPLYEIVRKHIYREH) adopts a C2H2-type 3; degenerate zinc-finger fold. Glycyl lysine isopeptide (Lys-Gly) (interchain with G-Cter in SUMO2) cross-links involve residues Lys203, Lys231, Lys266, Lys274, Lys278, Lys279, Lys311, and Lys335. Residues 221–244 (IHCKRCLFMPKSYEALVQHVIEDH) form a C2H2-type 4; degenerate zinc finger. Arg348 is subject to Asymmetric dimethylarginine. Positions 354–361 (NAPVSIPQ) are neuroprotective peptide; contributes to CTNNB1-binding, but less effective than whole N-terminal region. Residues 360–438 (PQQSQSVKQL…PAATGPPPSN (79 aa)) form a disordered region. Residues Lys367 and Lys407 each participate in a glycyl lysine isopeptide (Lys-Gly) (interchain with G-Cter in SUMO2) cross-link. Over residues 393–422 (SLQTANTSLPPGQVKSPSVSQSQASRVLGQ) the composition is skewed to polar residues. Phosphoserine is present on residues Ser408 and Ser412. A Glycyl lysine isopeptide (Lys-Gly) (interchain with G-Cter in SUMO2) cross-link involves residue Lys426. Positions 426–437 (KPPPAATGPPPS) are enriched in pro residues. The C2H2-type 5; atypical zinc-finger motif lies at 446-468 (KICTICNELFPENVYSVHFEKEH). 2 consecutive C2H2-type zinc fingers follow at residues 488 to 509 (SKCLYCNRYLPTDTLLNHMLIH) and 511 to 534 (LSCPYCRSTFNDVEKMAAHMRMVH). Glycyl lysine isopeptide (Lys-Gly) (interchain with G-Cter in SUMO2) cross-links involve residues Lys599 and Lys605. A Phosphoserine modification is found at Ser607. Residues Lys615, Lys620, Lys631, and Lys657 each participate in a glycyl lysine isopeptide (Lys-Gly) (interchain with G-Cter in SUMO2) cross-link. The C2H2-type 8; atypical zinc-finger motif lies at 621–646 (TLCPLCFSILKGPISDALAHHLRERH). Residues 661–685 (YKCIHCLGVYTSNMTASTITLHLVH) form a C2H2-type 9; atypical zinc finger. The tract at residues 690–711 (GKTQNGQDKTNAPSRLNQSPGL) is disordered. The segment covering 691 to 709 (KTQNGQDKTNAPSRLNQSP) has biased composition (polar residues). A Glycyl lysine isopeptide (Lys-Gly) (interchain with G-Cter in SUMO2) cross-link involves residue Lys698. Residue Ser708 is modified to Phosphoserine. Residues Lys715, Lys727, and Lys730 each participate in a glycyl lysine isopeptide (Lys-Gly) (interchain with G-Cter in SUMO2) cross-link. Ser737 is subject to Phosphoserine. Lys744 is covalently cross-linked (Glycyl lysine isopeptide (Lys-Gly) (interchain with G-Cter in SUMO2)). Positions 753–813 (LDPKGHEDDS…SNKRKKCVRD (61 aa)) form a DNA-binding region, homeobox. A Phosphoserine modification is found at Ser804. Residues Lys806, Lys828, and Lys834 each participate in a glycyl lysine isopeptide (Lys-Gly) (interchain with G-Cter in SUMO2) cross-link. The segment covering 851-880 (KDSRVNASKTVDKKHNLGKEDDSFSDSFEH) has biased composition (basic and acidic residues). The tract at residues 851–1037 (KDSRVNASKT…DTEQLKWKNS (187 aa)) is disordered. A phosphoserine mark is found at Ser875, Ser877, Ser885, Ser888, and Ser904. Residues Lys913, Lys928, and Lys941 each participate in a glycyl lysine isopeptide (Lys-Gly) (interchain with G-Cter in SUMO2) cross-link. Acidic residues predominate over residues 928 to 938 (KEEEEEEEEED). The segment covering 939-959 (GSKYETIHLTEEPAKLMHDAS) has biased composition (basic and acidic residues). Residues Ser959 and Ser961 each carry the phosphoserine modification. Positions 977–988 (PSESGPGSQQIS) are enriched in polar residues. A Glycyl lysine isopeptide (Lys-Gly) (interchain with G-Cter in SUMO2) cross-link involves residue Lys1022. Lys1041 and Lys1048 each carry N6-acetyllysine; alternate. Glycyl lysine isopeptide (Lys-Gly) (interchain with G-Cter in SUMO2); alternate cross-links involve residues Lys1041 and Lys1048. The interval 1050 to 1108 (QSQWENASENAERLPNPQIEWQNSTIDSEDGEQFDSMTDGVADPMHGSLTGVKLSSQQA) is disordered. Ser1077 carries the post-translational modification Phosphoserine.

In terms of assembly, interacts (via N-terminal region) with beta-catenin/CTNNB1 (via the central armadillo domains); interaction is direct and stabilizes CTNNB1 by modulating its phosphorylation by glycogen synthase kinase-3 beta GSK3B. Expressed in the brain, with a higher expression in cerebellum and hippocampus. Weakly expressed in lung, kidney and intestine, and expressed at intermediate level in testis.

The protein resides in the nucleus. It localises to the chromosome. Its function is as follows. May be involved in transcriptional regulation. May mediate some of the neuroprotective peptide VIP-associated effects involving normal growth and cancer proliferation. Positively modulates WNT-beta-catenin/CTNN1B signaling, acting by regulating phosphorylation of, and thereby stabilizing, CTNNB1. May be required for neural induction and neuronal differentiation. May be involved in erythroid differentiation. The sequence is that of Activity-dependent neuroprotector homeobox protein (Adnp) from Mus musculus (Mouse).